Consider the following 357-residue polypeptide: D-alanine--D-alanine ligase (357 aa).

One can recognise an ATP-grasp domain in the interval 145-339 (KEVMLYHGIQ…YGDLVMDIVN (195 aa)). 172 to 225 (PFDFPVVVKPTSGGSSVGTHIIHNQEELESGLEDVFRFDNSAIVEEFTPGREFS) serves as a coordination point for ATP. Residues Asp-294, Glu-306, and Asn-308 each coordinate Mg(2+).

Belongs to the D-alanine--D-alanine ligase family. Requires Mg(2+) as cofactor. It depends on Mn(2+) as a cofactor.

Its subcellular location is the cytoplasm. It catalyses the reaction 2 D-alanine + ATP = D-alanyl-D-alanine + ADP + phosphate + H(+). Its pathway is cell wall biogenesis; peptidoglycan biosynthesis. Cell wall formation. This Lacticaseibacillus paracasei (strain ATCC 334 / BCRC 17002 / CCUG 31169 / CIP 107868 / KCTC 3260 / NRRL B-441) (Lactobacillus paracasei) protein is D-alanine--D-alanine ligase.